We begin with the raw amino-acid sequence, 356 residues long: Histidinol-phosphate aminotransferase (356 aa).

At K214 the chain carries N6-(pyridoxal phosphate)lysine.

Belongs to the class-II pyridoxal-phosphate-dependent aminotransferase family. Histidinol-phosphate aminotransferase subfamily. As to quaternary structure, homodimer. Pyridoxal 5'-phosphate serves as cofactor.

It catalyses the reaction L-histidinol phosphate + 2-oxoglutarate = 3-(imidazol-4-yl)-2-oxopropyl phosphate + L-glutamate. The protein operates within amino-acid biosynthesis; L-histidine biosynthesis; L-histidine from 5-phospho-alpha-D-ribose 1-diphosphate: step 7/9. The protein is Histidinol-phosphate aminotransferase of Shigella boydii serotype 4 (strain Sb227).